Consider the following 340-residue polypeptide: Glycerol-3-phosphate dehydrogenase [NAD(P)+] (340 aa).

Positions 11, 33, and 110 each coordinate NADPH. Residues Lys110, Gly144, and Ser146 each contribute to the sn-glycerol 3-phosphate site. Position 148 (Ala148) interacts with NADPH. The sn-glycerol 3-phosphate site is built by Lys199, Asp252, Ser262, Arg263, and Asn264. The active-site Proton acceptor is the Lys199. Arg263 is a binding site for NADPH. The NADPH site is built by Val287 and Glu289.

The protein belongs to the NAD-dependent glycerol-3-phosphate dehydrogenase family.

It is found in the cytoplasm. It carries out the reaction sn-glycerol 3-phosphate + NAD(+) = dihydroxyacetone phosphate + NADH + H(+). The catalysed reaction is sn-glycerol 3-phosphate + NADP(+) = dihydroxyacetone phosphate + NADPH + H(+). It functions in the pathway membrane lipid metabolism; glycerophospholipid metabolism. Catalyzes the reduction of the glycolytic intermediate dihydroxyacetone phosphate (DHAP) to sn-glycerol 3-phosphate (G3P), the key precursor for phospholipid synthesis. This chain is Glycerol-3-phosphate dehydrogenase [NAD(P)+], found in Polynucleobacter asymbioticus (strain DSM 18221 / CIP 109841 / QLW-P1DMWA-1) (Polynucleobacter necessarius subsp. asymbioticus).